The chain runs to 140 residues: MTIQYTFSMIKPDAIKRNKIGQVNTYLENAGLKIVAQKMKFLTKYEAECFYDEHRARPFFNSLVEYITSGAVVLQVLKGEDAIILNRTIMGATNPAEAEAGTIRKDLGESIEANSIHGSDSENSAKREIEFFFNKSEIIE.

Positions 11, 59, 87, 93, 104, and 114 each coordinate ATP. The active-site Pros-phosphohistidine intermediate is His117.

The protein belongs to the NDK family. Homotetramer. It depends on Mg(2+) as a cofactor.

It is found in the cytoplasm. The catalysed reaction is a 2'-deoxyribonucleoside 5'-diphosphate + ATP = a 2'-deoxyribonucleoside 5'-triphosphate + ADP. It carries out the reaction a ribonucleoside 5'-diphosphate + ATP = a ribonucleoside 5'-triphosphate + ADP. Functionally, major role in the synthesis of nucleoside triphosphates other than ATP. The ATP gamma phosphate is transferred to the NDP beta phosphate via a ping-pong mechanism, using a phosphorylated active-site intermediate. This is Nucleoside diphosphate kinase from Rickettsia felis (strain ATCC VR-1525 / URRWXCal2) (Rickettsia azadi).